Reading from the N-terminus, the 544-residue chain is Membrane protein insertase YidC (544 aa).

Helical transmembrane passes span 6–26 (NLLLIALLFVTFMLWQAWETD), 343–363 (KFLHGFIGNWGFSIIAITFIV), 418–438 (LGGCLPLVIQMPIFLALYYML), 456–476 (LSAQDPYYILPILMGVTMFFI), and 497–517 (PVIFTVFFLWFPSGLVMYYIV).

It belongs to the OXA1/ALB3/YidC family. Type 1 subfamily. Interacts with the Sec translocase complex via SecD. Specifically interacts with transmembrane segments of nascent integral membrane proteins during membrane integration.

It is found in the cell inner membrane. In terms of biological role, required for the insertion and/or proper folding and/or complex formation of integral membrane proteins into the membrane. Involved in integration of membrane proteins that insert both dependently and independently of the Sec translocase complex, as well as at least some lipoproteins. Aids folding of multispanning membrane proteins. The protein is Membrane protein insertase YidC of Pectobacterium atrosepticum (strain SCRI 1043 / ATCC BAA-672) (Erwinia carotovora subsp. atroseptica).